The primary structure comprises 459 residues: Cysteine--tRNA ligase (459 aa).

C28 provides a ligand contact to Zn(2+). The 'HIGH' region signature appears at 30-40 (VTVYDLCHIGH). Zn(2+) is bound by residues C209, H234, and E238. The short motif at 266 to 270 (KMSKS) is the 'KMSKS' region element. K269 serves as a coordination point for ATP.

This sequence belongs to the class-I aminoacyl-tRNA synthetase family. Monomer. Zn(2+) serves as cofactor.

Its subcellular location is the cytoplasm. The enzyme catalyses tRNA(Cys) + L-cysteine + ATP = L-cysteinyl-tRNA(Cys) + AMP + diphosphate. The polypeptide is Cysteine--tRNA ligase (Shewanella oneidensis (strain ATCC 700550 / JCM 31522 / CIP 106686 / LMG 19005 / NCIMB 14063 / MR-1)).